A 218-amino-acid chain; its full sequence is Thiopurine S-methyltransferase (218 aa).

W11, L46, E67, and R122 together coordinate S-adenosyl-L-methionine.

This sequence belongs to the class I-like SAM-binding methyltransferase superfamily. TPMT family.

The protein localises to the cytoplasm. It carries out the reaction S-adenosyl-L-methionine + a thiopurine = S-adenosyl-L-homocysteine + a thiopurine S-methylether.. In Vibrio cholerae serotype O1 (strain ATCC 39315 / El Tor Inaba N16961), this protein is Thiopurine S-methyltransferase.